The chain runs to 164 residues: GTP-dependent dephospho-CoA kinase (164 aa).

6 residues coordinate GTP: Asp-40, Val-41, Val-42, Asp-59, Lys-61, and Glu-113.

Belongs to the GTP-dependent DPCK family.

It catalyses the reaction 3'-dephospho-CoA + GTP = GDP + CoA + H(+). Its pathway is cofactor biosynthesis; coenzyme A biosynthesis. In terms of biological role, catalyzes the GTP-dependent phosphorylation of the 3'-hydroxyl group of dephosphocoenzyme A to form coenzyme A (CoA). In Sulfolobus acidocaldarius (strain ATCC 33909 / DSM 639 / JCM 8929 / NBRC 15157 / NCIMB 11770), this protein is GTP-dependent dephospho-CoA kinase.